The following is a 547-amino-acid chain: Chaperonin GroEL (547 aa).

ATP is bound by residues 30-33 (TLGP), K51, 87-91 (DGTTT), G415, 479-481 (NAA), and D495.

Belongs to the chaperonin (HSP60) family. In terms of assembly, forms a cylinder of 14 subunits composed of two heptameric rings stacked back-to-back. Interacts with the co-chaperonin GroES.

The protein resides in the cytoplasm. It carries out the reaction ATP + H2O + a folded polypeptide = ADP + phosphate + an unfolded polypeptide.. Its function is as follows. Together with its co-chaperonin GroES, plays an essential role in assisting protein folding. The GroEL-GroES system forms a nano-cage that allows encapsulation of the non-native substrate proteins and provides a physical environment optimized to promote and accelerate protein folding. In Pseudomonas aeruginosa (strain UCBPP-PA14), this protein is Chaperonin GroEL.